The sequence spans 115 residues: Ribosome-binding factor A (115 aa).

The protein belongs to the RbfA family. In terms of assembly, monomer. Binds 30S ribosomal subunits, but not 50S ribosomal subunits or 70S ribosomes.

The protein localises to the cytoplasm. Its function is as follows. One of several proteins that assist in the late maturation steps of the functional core of the 30S ribosomal subunit. Associates with free 30S ribosomal subunits (but not with 30S subunits that are part of 70S ribosomes or polysomes). Required for efficient processing of 16S rRNA. May interact with the 5'-terminal helix region of 16S rRNA. The chain is Ribosome-binding factor A from Bacillus velezensis (strain DSM 23117 / BGSC 10A6 / LMG 26770 / FZB42) (Bacillus amyloliquefaciens subsp. plantarum).